A 550-amino-acid chain; its full sequence is Calcyphosin-2 (550 aa).

Disordered stretches follow at residues methionine 1–serine 20 and isoleucine 175–arginine 198. The segment covering aspartate 181 to serine 190 has biased composition (polar residues). EF-hand domains lie at arginine 379–glutamate 414, valine 415–glutamate 452, and tyrosine 453–proline 488. The Ca(2+) site is built by aspartate 466, asparagine 468, threonine 470, and aspartate 477.

The chain is Calcyphosin-2 (Caps2) from Mus musculus (Mouse).